Reading from the N-terminus, the 297-residue chain is Vacuolar protein sorting-associated protein 26C (297 aa).

It belongs to the VPS26 family. Component of the commander complex that is essential for endosomal recycling of transmembrane cargos; the commander complex is composed of the CCC subcomplex and the retriever subcomplex. Component of the heterotrimeric retriever complex consisting of VPS26C, VPS29 and VPS35L; within the complex interacts with VPS35L. Interacts with SNX17 (via C-terminus); the interaction is direct and associates SNX17 with the retriever complex. Interacts with SNX31; the interaction is direct.

It localises to the endosome. Functionally, component of the commander complex that is essential for endosomal recycling of transmembrane cargos; the commander complex is composed of the CCC subcomplex and the retriever subcomplex. Component of the retriever complex, which is a heterotrimeric complex related to retromer cargo-selective complex (CSC) and essential for retromer-independent retrieval and recycling of numerous cargos such as integrin alpha-5/beta-1 (ITGA5:ITGB1). The recruitment of the retriever complex to the endosomal membrane involves CCC and WASH complexes. In the endosomes, drives the retriever and recycling of NxxY-motif-containing cargo proteins by coupling to SNX17, a cargo essential for the homeostatic maintenance of numerous cell surface proteins associated with processes that include cell migration, cell adhesion, nutrient supply and cell signaling. The protein is Vacuolar protein sorting-associated protein 26C of Mus musculus (Mouse).